The following is a 239-amino-acid chain: Nicotinamide riboside transporter PnuC (239 aa).

The Cytoplasmic segment spans residues 1 to 21 (MDFFSVQNILVHIPIGAGGYD). A helical transmembrane segment spans residues 22 to 42 (LSWIEAVGTIAGLLCIGLASL). The Periplasmic portion of the chain corresponds to 43 to 48 (EKISNY). A helical transmembrane segment spans residues 49 to 68 (FFGLINVTLFGIIFFQIQLY). At 69–71 (ASL) the chain is on the cytoplasmic side. A helical transmembrane segment spans residues 72 to 89 (LLQVFFFAANIYGWYAWS). Residues 90 to 109 (RQTSQNEAELKIRWLPLPKA) are Periplasmic-facing. A helical membrane pass occupies residues 110–127 (LSWLAVCVVSIGLMTVFI). The Cytoplasmic portion of the chain corresponds to 128-157 (NPVFAFLTRVAVMIMQALGLQVVMPELQPD). The chain crosses the membrane as a helical span at residues 158-177 (AFPFWDSCMMVLSIVAMILM). Residues 178 to 183 (TRKYVE) lie on the Periplasmic side of the membrane. A helical membrane pass occupies residues 184-206 (NWLLWVIINVISVVIFALQGVYA). Residues Trp188 and Asn192 each contribute to the beta-nicotinamide D-riboside site. Topologically, residues 207 to 239 (MSLEYIILTFIALNGSRMWINSARERGSRALSH) are cytoplasmic.

The protein belongs to the nicotinamide ribonucleoside (NR) uptake permease (TC 4.B.1) family.

Its subcellular location is the cell inner membrane. Required for nicotinamide riboside transport across the inner membrane. The protein is Nicotinamide riboside transporter PnuC (pnuC) of Escherichia coli (strain K12).